A 141-amino-acid polypeptide reads, in one-letter code: Cystatin (141 aa).

Residues methionine 1–methionine 26 form the signal peptide. The 101-residue stretch at glycine 29–tryptophan 129 folds into the Cystatin domain. The Secondary area of contact motif lies at glutamine 73–glycine 77. Disulfide bonds link cysteine 91–cysteine 107 and cysteine 120–cysteine 140.

It belongs to the cystatin family. As to expression, expressed by the venom gland at an extremely low level (at protein level).

It localises to the secreted. Its function is as follows. Inhibits various C1 cysteine proteases including cathepsin L, papain and cathepsin B. This protein has no toxic activity and its function in the venom is unknown. It may play a role as a housekeeping or regulatory protein. This chain is Cystatin, found in Oxyuranus microlepidotus (Inland taipan).